A 150-amino-acid polypeptide reads, in one-letter code: Cytochrome c-type biogenesis protein CcmE (150 aa).

Residues 1–7 (MTRKQKR) are Cytoplasmic-facing. A helical; Signal-anchor for type II membrane protein membrane pass occupies residues 8–28 (LAIIGGGVAFLTAAVLLVMFA). Residues 29 to 150 (FSQAVAYFYV…VTLGGEENIR (122 aa)) are Periplasmic-facing. Heme is bound by residues His123 and Tyr127.

This sequence belongs to the CcmE/CycJ family.

The protein localises to the cell inner membrane. Its function is as follows. Heme chaperone required for the biogenesis of c-type cytochromes. Transiently binds heme delivered by CcmC and transfers the heme to apo-cytochromes in a process facilitated by CcmF and CcmH. This is Cytochrome c-type biogenesis protein CcmE from Rhizobium meliloti (strain 1021) (Ensifer meliloti).